Consider the following 155-residue polypeptide: RNA pyrophosphohydrolase (155 aa).

The Nudix hydrolase domain occupies 5–149; sequence EYRSGVGIML…KKPLYEKILS (145 aa). Positions 39-60 match the Nudix box motif; sequence GGLEAKETPEVGVLRELEEETG.

Belongs to the Nudix hydrolase family. RppH subfamily. Requires a divalent metal cation as cofactor.

Functionally, accelerates the degradation of transcripts by removing pyrophosphate from the 5'-end of triphosphorylated RNA, leading to a more labile monophosphorylated state that can stimulate subsequent ribonuclease cleavage. The protein is RNA pyrophosphohydrolase of Zymomonas mobilis subsp. mobilis (strain ATCC 31821 / ZM4 / CP4).